The primary structure comprises 275 residues: MNRIQSVFSQLKSQNRAALIPFITAGDPDATTTVALMHRLTQAGVDLIELGVPFSDPMADGPTIQRSSERALKHHISLKDVFSMVAEFRKTNQSTPVVLMGYANPIEAMGYKDFVQTAGHAGVDGVLVVDYPPEECTEWVRYLKEQNIDPIFLLSPTTPESRIRRVAELARGYVYYVSLKGVTGASHLDLHEVGDKLSQLRSYINIPIGVGFGIRDEQTARRIAEQADAVVIGSRIVEEIEHSPAADLLANVGALVESLRRAIDAKSDHSSITEK.

Active-site proton acceptor residues include glutamate 49 and aspartate 60.

The protein belongs to the TrpA family. In terms of assembly, tetramer of two alpha and two beta chains.

The catalysed reaction is (1S,2R)-1-C-(indol-3-yl)glycerol 3-phosphate + L-serine = D-glyceraldehyde 3-phosphate + L-tryptophan + H2O. It functions in the pathway amino-acid biosynthesis; L-tryptophan biosynthesis; L-tryptophan from chorismate: step 5/5. Its function is as follows. The alpha subunit is responsible for the aldol cleavage of indoleglycerol phosphate to indole and glyceraldehyde 3-phosphate. The sequence is that of Tryptophan synthase alpha chain from Nitrosomonas europaea (strain ATCC 19718 / CIP 103999 / KCTC 2705 / NBRC 14298).